The sequence spans 118 residues: UPF0342 protein Hore_03100 (118 aa).

This sequence belongs to the UPF0342 family.

This Halothermothrix orenii (strain H 168 / OCM 544 / DSM 9562) protein is UPF0342 protein Hore_03100.